Consider the following 345-residue polypeptide: Mitochondrial metalloendopeptidase OMA1 (345 aa).

The Mitochondrial matrix portion of the chain corresponds to 1-67; sequence MLRNIIRFKG…ILLDKSSRKY (67 aa). A helical membrane pass occupies residues 68–88; the sequence is LALLFGGCSLFYYTHLDKAPV. Over 89–345 the chain is Mitochondrial intermembrane; the sequence is SDRSRFIWVS…GNYYKSFFSM (257 aa). Zn(2+) is bound at residue His-203. The active site involves Glu-204. Zn(2+) is bound by residues His-207 and Glu-257. Cys-272 and Cys-332 are joined by a disulfide. Residues 314-345 are required for protease activation; sequence ENMSKWLPKANEIYEQSDCSSMGNYYKSFFSM.

The protein belongs to the peptidase M48 family. Homooligomer. Zn(2+) is required as a cofactor. In terms of processing, forms a redox-dependent disulfide bond, which plays a structural role and regulates its conformational stability and activity.

The protein resides in the mitochondrion inner membrane. Its activity is regulated as follows. Protease activity is induced in response to various mitochondrial stress, such as changes in membrane potential, oxidative stress or chronic hyperpolarization, and depends on its C-terminal region. In terms of biological role, protease that is part of the quality control system in the inner membrane of mitochondria. Activated in response to various mitochondrial stress, leading to the proteolytic cleavage of target proteins, such as OXA1 and COX1. Cleaves and thereby promotes the turnover of mistranslated or misfolded membrane proteins. Cleaves the misfolded multi-pass membrane protein OXA1. Involved in quality control of cytochrome oxidase assembly: mediates the cleavage of COX1 in cells lacking COA2. Required for the stability of the respiratory supercomplexes. Required for TOR signaling. This is Mitochondrial metalloendopeptidase OMA1 from Saccharomyces cerevisiae (strain ATCC 204508 / S288c) (Baker's yeast).